We begin with the raw amino-acid sequence, 72 residues long: MKADIHPKYAEVQVTCSCGNTFETRSTLGKPALHVEVCAACHPFYTGKQKIVDTAGRVERFRQKYGNVQRLG.

Cys-16, Cys-18, Cys-38, and Cys-41 together coordinate Zn(2+).

It belongs to the bacterial ribosomal protein bL31 family. Type A subfamily. As to quaternary structure, part of the 50S ribosomal subunit. Zn(2+) serves as cofactor.

In terms of biological role, binds the 23S rRNA. The sequence is that of Large ribosomal subunit protein bL31 from Aromatoleum aromaticum (strain DSM 19018 / LMG 30748 / EbN1) (Azoarcus sp. (strain EbN1)).